The following is a 1312-amino-acid chain: Probable histone-lysine N-methyltransferase lin-59 (1312 aa).

Polar residues-rich tracts occupy residues 1–11 (MHGAGEQQQRY) and 25–36 (STSSHQYQQQGA). Disordered stretches follow at residues 1 to 41 (MHGA…QMHQ), 54 to 81 (TTTS…RQQG), 154 to 223 (QPSG…KPVD), 312 to 435 (EESK…PPPV), and 524 to 556 (KDNI…EPSE). Low complexity predominate over residues 54–68 (TTTSAAASTSSSGGS). Positions 69–78 (NSSGGSGGHR) are enriched in gly residues. A compositionally biased stretch (low complexity) spans 160–176 (PMSSNAPATTSSATPDS). A compositionally biased stretch (acidic residues) spans 200 to 210 (DHDDEEDDDGP). Positions 312-321 (EESKKKKDME) are enriched in basic and acidic residues. The segment covering 344–367 (ATRSTNSPDVTTSNLPEEPSTSTM) has biased composition (polar residues). Over residues 371 to 382 (KENEDVEKVEGK) the composition is skewed to basic and acidic residues. A compositionally biased stretch (basic residues) spans 383 to 394 (RRGRKPKKRRGF). Composition is skewed to basic and acidic residues over residues 395–419 (HKES…DHLP) and 524–535 (KDNIKKEVKEES). The AWS domain maps to 590–635 (APSLTCGCTKGACTSDMDCLNRALRVQCSSDCSVPYCSNRRFWKED). Residues 638–750 (NKLCVSNGPR…PNAEITVDKS (113 aa)) form the SET domain. The disordered stretch occupies residues 913-934 (DNAPRARALSTSCPSPVPSKRG). The segment at 967–1027 (AVRCICGALD…EYICDFCTNK (61 aa)) adopts a PHD-type zinc-finger fold. One can recognise a BAH domain in the interval 1100–1223 (NKYRFPKAAT…KTQRVFEKVP (124 aa)). A disordered region spans residues 1248-1295 (RDFRPYDPSNPSPKPPKTSSIPSTSSIDPPQSSSDGLPEVDTKKLSKR). Residues 1264 to 1281 (KTSSIPSTSSIDPPQSSS) show a composition bias toward low complexity.

It belongs to the class V-like SAM-binding methyltransferase superfamily. Histone-lysine methyltransferase family. SET2 subfamily. As to expression, widely expressed throughout embryonic development and into adulthood.

It is found in the nucleus. It carries out the reaction L-lysyl-[histone] + S-adenosyl-L-methionine = N(6)-methyl-L-lysyl-[histone] + S-adenosyl-L-homocysteine + H(+). Probable histone methyltransferase. Essential protein required to maintain expression of homeotic genes egl-5 and mab-5. May play an analogous role to the trithorax Group (trxG) proteins. TrxG proteins form multiprotein complexes that are required to maintain the transcriptionally active state of homeotic genes throughout development. May act via a modification of chromatin. The chain is Probable histone-lysine N-methyltransferase lin-59 (lin-59) from Caenorhabditis elegans.